The sequence spans 120 residues: NAD(P)H-quinone oxidoreductase subunit 3, chloroplastic (120 aa).

Helical transmembrane passes span 9-29 (IFWAFLMISSVIPILAFLISG), 64-84 (MFALVFVVFDVETVFLYPWAV), and 88-108 (ILGVYVFIEALIFVLIPVVGS).

It belongs to the complex I subunit 3 family. As to quaternary structure, NDH is composed of at least 16 different subunits, 5 of which are encoded in the nucleus.

The protein resides in the plastid. It localises to the chloroplast thylakoid membrane. It carries out the reaction a plastoquinone + NADH + (n+1) H(+)(in) = a plastoquinol + NAD(+) + n H(+)(out). The enzyme catalyses a plastoquinone + NADPH + (n+1) H(+)(in) = a plastoquinol + NADP(+) + n H(+)(out). Functionally, NDH shuttles electrons from NAD(P)H:plastoquinone, via FMN and iron-sulfur (Fe-S) centers, to quinones in the photosynthetic chain and possibly in a chloroplast respiratory chain. The immediate electron acceptor for the enzyme in this species is believed to be plastoquinone. Couples the redox reaction to proton translocation, and thus conserves the redox energy in a proton gradient. The chain is NAD(P)H-quinone oxidoreductase subunit 3, chloroplastic from Nymphaea alba (White water-lily).